The sequence spans 460 residues: Methylenetetrahydrofolate--tRNA-(uracil-5-)-methyltransferase TrmFO (460 aa).

Residue 15 to 20 participates in FAD binding; it reads GAGLAG.

The protein belongs to the MnmG family. TrmFO subfamily. Requires FAD as cofactor.

The protein resides in the cytoplasm. The catalysed reaction is uridine(54) in tRNA + (6R)-5,10-methylene-5,6,7,8-tetrahydrofolate + NADH + H(+) = 5-methyluridine(54) in tRNA + (6S)-5,6,7,8-tetrahydrofolate + NAD(+). It catalyses the reaction uridine(54) in tRNA + (6R)-5,10-methylene-5,6,7,8-tetrahydrofolate + NADPH + H(+) = 5-methyluridine(54) in tRNA + (6S)-5,6,7,8-tetrahydrofolate + NADP(+). Functionally, catalyzes the folate-dependent formation of 5-methyl-uridine at position 54 (M-5-U54) in all tRNAs. This chain is Methylenetetrahydrofolate--tRNA-(uracil-5-)-methyltransferase TrmFO, found in Synechococcus sp. (strain CC9902).